The sequence spans 1809 residues: Stereocilin (1809 aa).

The N-terminal stretch at 1–22 (MALSLQPQLLLLLSLLPQEVTS) is a signal peptide. N-linked (GlcNAc...) asparagine glycans are attached at residues Asn-63, Asn-200, Asn-295, Asn-352, and Asn-364. The interval 376-426 (PATPRPPPTTPRPPPTTPQPPPTTTQPIPDTTQPPPVTPRPPPTTPQPPPS) is disordered. Pro residues-rich tracts occupy residues 378-399 (TPRP…PPTT) and 407-426 (TQPP…PPPS). N-linked (GlcNAc...) asparagine glycans are attached at residues Asn-467, Asn-516, Asn-580, Asn-605, Asn-696, Asn-860, Asn-952, Asn-1000, Asn-1213, and Asn-1308.

It belongs to the stereocilin family. As to expression, strongly expressed in the inner ear, detected in the testis, and barely detected in the eye. Detected in the six sensory areas of the inner ear by immunofluorescence. Expressed only in the sensory hair cells and associated with the stereocilia, the stiff microvilli forming the structure for mechanoreception of sound stimulation.

The protein localises to the cell surface. It is found in the cell projection. The protein resides in the kinocilium. Its subcellular location is the stereocilium. Essential to the formation of horizontal top connectors between outer hair cell stereocilia. This chain is Stereocilin (Strc), found in Mus musculus (Mouse).